The sequence spans 134 residues: Holo-[acyl-carrier-protein] synthase (134 aa).

Mg(2+) contacts are provided by Asp-8 and Glu-58.

It belongs to the P-Pant transferase superfamily. AcpS family. Mg(2+) is required as a cofactor.

It is found in the cytoplasm. It carries out the reaction apo-[ACP] + CoA = holo-[ACP] + adenosine 3',5'-bisphosphate + H(+). In terms of biological role, transfers the 4'-phosphopantetheine moiety from coenzyme A to a Ser of acyl-carrier-protein. In Acidiphilium cryptum (strain JF-5), this protein is Holo-[acyl-carrier-protein] synthase.